A 362-amino-acid chain; its full sequence is Molybdenum import ATP-binding protein ModC (362 aa).

The 235-residue stretch at 2-236 folds into the ABC transporter domain; that stretch reads ASPIEVRLQM…LDLPLAMGSD (235 aa). Residue 34–41 participates in ATP binding; the sequence is GPSGSGKT. Positions 297–362 constitute a Mop domain; that stretch reads QSSILNRLPV…AQIKAVAVLA (66 aa).

It belongs to the ABC transporter superfamily. Molybdate importer (TC 3.A.1.8) family. As to quaternary structure, the complex is composed of two ATP-binding proteins (ModC), two transmembrane proteins (ModB) and a solute-binding protein (ModA).

The protein localises to the cell inner membrane. It catalyses the reaction molybdate(out) + ATP + H2O = molybdate(in) + ADP + phosphate + H(+). Functionally, part of the ABC transporter complex ModABC involved in molybdenum import. Responsible for energy coupling to the transport system. The protein is Molybdenum import ATP-binding protein ModC of Pseudomonas syringae pv. syringae (strain B728a).